The following is a 660-amino-acid chain: Rhamnogalacturonate lyase B (660 aa).

Residues 1 to 18 (MRLGVCFSLAAAASVARA) form the signal peptide. N-linked (GlcNAc...) asparagine glycosylation is found at N25, N109, N142, and N284. A disordered region spans residues 446–466 (RLGTPDKSSGEFRHGAARDPT). The segment covering 453–466 (SSGEFRHGAARDPT) has biased composition (basic and acidic residues). N-linked (GlcNAc...) asparagine glycosylation is found at N524, N566, and N635.

Belongs to the polysaccharide lyase 4 family.

The protein localises to the secreted. It catalyses the reaction Endotype eliminative cleavage of L-alpha-rhamnopyranosyl-(1-&gt;4)-alpha-D-galactopyranosyluronic acid bonds of rhamnogalacturonan I domains in ramified hairy regions of pectin leaving L-rhamnopyranose at the reducing end and 4-deoxy-4,5-unsaturated D-galactopyranosyluronic acid at the non-reducing end.. Pectinolytic enzymes consist of four classes of enzymes: pectin lyase, polygalacturonase, pectin methylesterase and rhamnogalacturonase. Degrades the rhamnogalacturonan I (RG-I) backbone of pectin. Active against linseed rhamnogalacturonan. This chain is Rhamnogalacturonate lyase B (rglB), found in Emericella nidulans (strain FGSC A4 / ATCC 38163 / CBS 112.46 / NRRL 194 / M139) (Aspergillus nidulans).